The sequence spans 368 residues: Methylthioribose-1-phosphate isomerase (368 aa).

Substrate is bound by residues 54–56, R91, and Q204; that span reads RGA. Residue D245 is the Proton donor of the active site. 255-256 contributes to the substrate binding site; that stretch reads NK.

This sequence belongs to the eIF-2B alpha/beta/delta subunits family. MtnA subfamily.

It carries out the reaction 5-(methylsulfanyl)-alpha-D-ribose 1-phosphate = 5-(methylsulfanyl)-D-ribulose 1-phosphate. Its pathway is amino-acid biosynthesis; L-methionine biosynthesis via salvage pathway; L-methionine from S-methyl-5-thio-alpha-D-ribose 1-phosphate: step 1/6. In terms of biological role, catalyzes the interconversion of methylthioribose-1-phosphate (MTR-1-P) into methylthioribulose-1-phosphate (MTRu-1-P). In Gluconobacter oxydans (strain 621H) (Gluconobacter suboxydans), this protein is Methylthioribose-1-phosphate isomerase.